A 525-amino-acid chain; its full sequence is GMP synthase [glutamine-hydrolyzing] (525 aa).

Positions Arg9 to Leu207 constitute a Glutamine amidotransferase type-1 domain. Residue Cys86 is the Nucleophile of the active site. Residues His181 and Glu183 contribute to the active site. Residues Trp208–Arg400 form the GMPS ATP-PPase domain. Ser235–Ser241 is a binding site for ATP.

In terms of assembly, homodimer.

It carries out the reaction XMP + L-glutamine + ATP + H2O = GMP + L-glutamate + AMP + diphosphate + 2 H(+). It participates in purine metabolism; GMP biosynthesis; GMP from XMP (L-Gln route): step 1/1. Functionally, catalyzes the synthesis of GMP from XMP. The polypeptide is GMP synthase [glutamine-hydrolyzing] (Citrobacter koseri (strain ATCC BAA-895 / CDC 4225-83 / SGSC4696)).